Reading from the N-terminus, the 100-residue chain is Nucleoid-associated protein HPSH_00175 (100 aa).

Belongs to the YbaB/EbfC family. Homodimer.

The protein resides in the cytoplasm. It localises to the nucleoid. Binds to DNA and alters its conformation. May be involved in regulation of gene expression, nucleoid organization and DNA protection. The chain is Nucleoid-associated protein HPSH_00175 from Helicobacter pylori (strain Shi470).